The sequence spans 346 residues: NADH-ubiquinone oxidoreductase chain 2 (346 aa).

A run of 11 helical transmembrane segments spans residues 1–21 (MNPH…TITI), 25–45 (HWVL…PLIS), 60–80 (FLTQ…NAWA), 95–115 (CLLL…HFWF), 124–144 (LMTA…LLLM), 149–169 (LNPA…GWMG), 178–195 (ILAF…IILV), 200–219 (LALL…FMAL), 242–262 (ATLM…GFMP), 274–294 (EMTP…FFYL), and 326–346 (AILA…HAIV).

This sequence belongs to the complex I subunit 2 family.

It localises to the mitochondrion inner membrane. The catalysed reaction is a ubiquinone + NADH + 5 H(+)(in) = a ubiquinol + NAD(+) + 4 H(+)(out). Functionally, core subunit of the mitochondrial membrane respiratory chain NADH dehydrogenase (Complex I) that is believed to belong to the minimal assembly required for catalysis. Complex I functions in the transfer of electrons from NADH to the respiratory chain. The immediate electron acceptor for the enzyme is believed to be ubiquinone. The protein is NADH-ubiquinone oxidoreductase chain 2 (MT-ND2) of Mareca americana (American wigeon).